Consider the following 564-residue polypeptide: Interactor of constitutive active ROPs 3 (564 aa).

Disordered regions lie at residues 1–73 and 88–135; these read MQTQ…SRIT and KAKD…SALE. The segment covering 33–44 has biased composition (polar residues); sequence ESSSSPISATNR. Basic and acidic residues-rich tracts occupy residues 63-73 and 98-123; these read VSEKKRPSRIT and TSKKQAEQEAEESRKQLQEVSSKLEE. 2 coiled-coil regions span residues 70-133 and 231-514; these read SRIT…ETSA and AETE…AATA. S533 is subject to Phosphoserine.

The protein belongs to the ICR family. In terms of assembly, interacts with ARAC11 in vitro. In terms of tissue distribution, expressed in flowers.

In terms of biological role, acts as a scaffold, mediating interaction of ROPs with different proteins. The sequence is that of Interactor of constitutive active ROPs 3 (ICR3) from Arabidopsis thaliana (Mouse-ear cress).